Reading from the N-terminus, the 233-residue chain is Demethylmenaquinone methyltransferase (233 aa).

S-adenosyl-L-methionine is bound by residues threonine 58, aspartate 79, and 106–107 (NA).

The protein belongs to the class I-like SAM-binding methyltransferase superfamily. MenG/UbiE family.

The catalysed reaction is a 2-demethylmenaquinol + S-adenosyl-L-methionine = a menaquinol + S-adenosyl-L-homocysteine + H(+). It functions in the pathway quinol/quinone metabolism; menaquinone biosynthesis; menaquinol from 1,4-dihydroxy-2-naphthoate: step 2/2. In terms of biological role, methyltransferase required for the conversion of demethylmenaquinol (DMKH2) to menaquinol (MKH2). This is Demethylmenaquinone methyltransferase from Bacillus subtilis (strain 168).